Reading from the N-terminus, the 396-residue chain is Adenosine deaminase 1 (396 aa).

The disordered stretch occupies residues 1–26; it reads MTSRSTEKSAAANPAAVSKTPSPDRI. Zn(2+) contacts are provided by H35 and H37. Substrate-binding residues include H37, D39, and G197. Zn(2+) is bound at residue H224. Catalysis depends on E227, which acts as the Proton donor. Residue D316 coordinates Zn(2+).

The protein belongs to the metallo-dependent hydrolases superfamily. Adenosine and AMP deaminases family. Adenosine deaminase subfamily. In terms of assembly, homotetramer. It depends on Zn(2+) as a cofactor.

It catalyses the reaction adenosine + H2O + H(+) = inosine + NH4(+). The enzyme catalyses 2'-deoxyadenosine + H2O + H(+) = 2'-deoxyinosine + NH4(+). With respect to regulation, coformycin and 2'-deoxycoformycin, whose structures mimic the transition state of the deamination reaction, are potent competitive inhibitors. In terms of biological role, catalyzes the hydrolytic deamination of adenosine and 2-deoxyadenosine. The protein is Adenosine deaminase 1 of Streptomyces coelicolor (strain ATCC BAA-471 / A3(2) / M145).